We begin with the raw amino-acid sequence, 181 residues long: Ribosome maturation factor RimM (181 aa).

The region spanning 99 to 172 is the PRC barrel domain; sequence EDEFYQVDLI…FLIVDPMAAG (74 aa).

The protein belongs to the RimM family. Binds ribosomal protein uS19.

It localises to the cytoplasm. An accessory protein needed during the final step in the assembly of 30S ribosomal subunit, possibly for assembly of the head region. Essential for efficient processing of 16S rRNA. May be needed both before and after RbfA during the maturation of 16S rRNA. It has affinity for free ribosomal 30S subunits but not for 70S ribosomes. This Bartonella tribocorum (strain CIP 105476 / IBS 506) protein is Ribosome maturation factor RimM.